The primary structure comprises 504 residues: Crh-like protein CRH12 (504 aa).

A signal peptide spans 1–18 (MYKQILTFLILFLRYILS). In terms of domain architecture, GH16 spans 19-270 (EFPDDPYEDD…YSKALTYSYG (252 aa)). N34 is a glycosylation site (N-linked (GlcNAc...) asparagine). The cysteines at positions 43 and 51 are disulfide-linked. E138 (nucleophile) is an active-site residue. E143 functions as the Proton donor in the catalytic mechanism. A chitin-binding site is contributed by E143. The N-linked (GlcNAc...) asparagine glycan is linked to N161. Chitin is bound by residues K221, W225, and T234. Residues 304–404 (KPTPKQETDD…LDISTQLPPL (101 aa)) form a disordered region. The segment covering 316-329 (VLTSSKSQRVATTI) has biased composition (polar residues). Over residues 356-378 (WETEQDETGTDDTENSDNEEEES) the composition is skewed to acidic residues. 3 N-linked (GlcNAc...) asparagine glycosylation sites follow: N407, N416, and N425. G479 carries the GPI-anchor amidated glycine lipid modification. Residues 480-504 (VSSILATSFSSVVIAEILVIVVLLL) constitute a propeptide, removed in mature form.

The protein belongs to the glycosyl hydrolase 16 family. CRH1 subfamily. The GPI-anchor is attached to the protein in the endoplasmic reticulum and serves to target the protein to the cell surface. There, the glucosamine-inositol phospholipid moiety is cleaved off and the GPI-modified mannoprotein is covalently attached via its lipidless GPI glycan remnant to the 1,6-beta-glucan of the outer cell wall layer.

The protein localises to the secreted. The protein resides in the cell wall. Its subcellular location is the membrane. It carries out the reaction Random endo-hydrolysis of N-acetyl-beta-D-glucosaminide (1-&gt;4)-beta-linkages in chitin and chitodextrins.. Its function is as follows. Dual chitinase/transglycosylase that plays a role in cell wall architecture. Chitinase and transglycosylase activities are coupled. Required for the polysaccharide cross-linking at the septa and the cell wall. More specifically, transfers chitin to 1,6-beta-glucan in the cell wall. Plays an important role in fungal pathogenesis via its functions in cell wall assembly and regeneration, filamentation, and adherence to host cells. The chain is Crh-like protein CRH12 (CRH12) from Candida albicans (strain SC5314 / ATCC MYA-2876) (Yeast).